A 391-amino-acid polypeptide reads, in one-letter code: 3-ketoacyl-CoA thiolase (391 aa).

Cys-95 functions as the Acyl-thioester intermediate in the catalytic mechanism. Residues His-347 and Cys-377 each act as proton acceptor in the active site.

Belongs to the thiolase-like superfamily. Thiolase family. Heterotetramer of two alpha chains (FadB) and two beta chains (FadA).

Its subcellular location is the cytoplasm. It catalyses the reaction an acyl-CoA + acetyl-CoA = a 3-oxoacyl-CoA + CoA. It functions in the pathway lipid metabolism; fatty acid beta-oxidation. Catalyzes the final step of fatty acid oxidation in which acetyl-CoA is released and the CoA ester of a fatty acid two carbons shorter is formed. The sequence is that of 3-ketoacyl-CoA thiolase from Pseudomonas aeruginosa (strain UCBPP-PA14).